The following is a 212-amino-acid chain: Large ribosomal subunit protein uL4 (212 aa).

Belongs to the universal ribosomal protein uL4 family. In terms of assembly, part of the 50S ribosomal subunit.

Functionally, one of the primary rRNA binding proteins, this protein initially binds near the 5'-end of the 23S rRNA. It is important during the early stages of 50S assembly. It makes multiple contacts with different domains of the 23S rRNA in the assembled 50S subunit and ribosome. In terms of biological role, forms part of the polypeptide exit tunnel. This chain is Large ribosomal subunit protein uL4, found in Caulobacter vibrioides (strain ATCC 19089 / CIP 103742 / CB 15) (Caulobacter crescentus).